Here is a 191-residue protein sequence, read N- to C-terminus: Ribosome hibernation promotion factor (191 aa).

Positions 100 to 123 (KQRQEGRPEPLPGPAEAEVNAQGS) are disordered.

It belongs to the HPF/YfiA ribosome-associated protein family. Long HPF subfamily. In terms of assembly, interacts with 100S ribosomes.

The protein localises to the cytoplasm. Its function is as follows. Required for dimerization of active 70S ribosomes into 100S ribosomes in stationary phase; 100S ribosomes are translationally inactive and sometimes present during exponential growth. The sequence is that of Ribosome hibernation promotion factor from Deinococcus radiodurans (strain ATCC 13939 / DSM 20539 / JCM 16871 / CCUG 27074 / LMG 4051 / NBRC 15346 / NCIMB 9279 / VKM B-1422 / R1).